The sequence spans 83 residues: Tetracenomycin polyketide synthase acyl carrier protein (83 aa).

Residues 3–83 (QIGLPRLVEI…VNTETAGEVA (81 aa)) form the Carrier domain. Ser-41 is subject to O-(pantetheine 4'-phosphoryl)serine.

The tetracenomycin polyketide synthase (TCM PKS) is composed of a ketosynthase complex (TcmKL), an acyl carrier protein (TcmM), a cyclase (TcmN) and a probable second cyclase (TcmJ). Requires pantetheine 4'-phosphate as cofactor. 4'-phosphopantetheine is transferred from CoA to a specific serine of apo-ACP.

The enzyme catalyses 10 malonyl-CoA + 8 H(+) = tetracenomycin F2 + 10 CO2 + 10 CoA + 2 H2O. Its pathway is antibiotic biosynthesis; tetracenomycin C biosynthesis. Functionally, involved in the biosynthesis of tetracenomycin C (TCM C). Part of a type II polyketide synthase (PKS) that catalyzes the synthesis of tetracenomycin F2 (TCM F2), a precursor of TCM C, from malonyl-CoA. TcmM is an acyl carrier protein that serves as an acceptor of malonate from malonyl-CoA and acts as the tether for the substrates and intermediates of polyketide assembly. The malonyl CoA-acyl carrier protein transacylase FabD (MCT) is required to catalyze the transacylation between malonyl-CoA and TcmM, although a relatively slow spontaneous self-malonylation of TcmM also occurs in a reaction without the MCT. The chain is Tetracenomycin polyketide synthase acyl carrier protein from Streptomyces glaucescens.